The following is a 277-amino-acid chain: Phosphonates import ATP-binding protein PhnC 2 (277 aa).

Residues 5-253 (IHVQGLNKTF…FLNDLYGADA (249 aa)) form the ABC transporter domain. 37 to 44 (GASGSGKS) is an ATP binding site.

The protein belongs to the ABC transporter superfamily. Phosphonates importer (TC 3.A.1.9.1) family. As to quaternary structure, the complex is composed of two ATP-binding proteins (PhnC), two transmembrane proteins (PhnE) and a solute-binding protein (PhnD).

It localises to the cell inner membrane. The catalysed reaction is phosphonate(out) + ATP + H2O = phosphonate(in) + ADP + phosphate + H(+). Its function is as follows. Part of the ABC transporter complex PhnCDE involved in phosphonates import. Responsible for energy coupling to the transport system. This is Phosphonates import ATP-binding protein PhnC 2 from Pseudomonas savastanoi pv. phaseolicola (strain 1448A / Race 6) (Pseudomonas syringae pv. phaseolicola (strain 1448A / Race 6)).